Reading from the N-terminus, the 246-residue chain is uncharacterized protein (246 aa).

Positions 1 to 30 (MKKKQVSHAIIISVMLSFVIAVFHTIHASE) are cleaved as a signal peptide.

This is an uncharacterized protein from Bacillus subtilis (strain 168).